We begin with the raw amino-acid sequence, 561 residues long: BTB/POZ domain-containing protein At2g46260 (561 aa).

2 disordered regions span residues 1–31 (MRGSNNTDLFDPKTEMDSNFSRHGSSSEGDF) and 100–119 (LTDNNQPDMDDAPGGDNLDD). Residues 17–28 (DSNFSRHGSSSE) show a composition bias toward polar residues. The span at 107 to 119 (DMDDAPGGDNLDD) shows a compositional bias: acidic residues. Residues 143-212 (IDCSTVVRVK…MYSNSLSVTT (70 aa)) enclose the BTB domain. Residues 266 to 358 (QPLTDAAKQF…YMTCRKLKKV (93 aa)) form the BACK domain.

It functions in the pathway protein modification; protein ubiquitination. In terms of biological role, may act as a substrate-specific adapter of an E3 ubiquitin-protein ligase complex (CUL3-RBX1-BTB) which mediates the ubiquitination and subsequent proteasomal degradation of target proteins. This is BTB/POZ domain-containing protein At2g46260 from Arabidopsis thaliana (Mouse-ear cress).